A 180-amino-acid chain; its full sequence is MYSGKIGYIIYPQISMEFSATYQPKYRLHYSLQHKNLINGLTIPKTIGNTTIVSNIYMLNLIYDLEKIKTFTPFIILGGGITRVKVKSTSSKWSLINNDYFKVHRTSKNCVTWQAGLGIAQHITPDLSIDATAKLQTAYRVRINYDTLDMKTVQLMNANSIKKTISVGEFGIGFTYRLPF.

This is an uncharacterized protein from Rickettsia prowazekii (strain Madrid E).